Here is a 211-residue protein sequence, read N- to C-terminus: ATP-dependent Clp protease proteolytic subunit (211 aa).

Catalysis depends on serine 106, which acts as the Nucleophile. Residue histidine 131 is part of the active site.

This sequence belongs to the peptidase S14 family. As to quaternary structure, fourteen ClpP subunits assemble into 2 heptameric rings which stack back to back to give a disk-like structure with a central cavity, resembling the structure of eukaryotic proteasomes.

Its subcellular location is the cytoplasm. It carries out the reaction Hydrolysis of proteins to small peptides in the presence of ATP and magnesium. alpha-casein is the usual test substrate. In the absence of ATP, only oligopeptides shorter than five residues are hydrolyzed (such as succinyl-Leu-Tyr-|-NHMec, and Leu-Tyr-Leu-|-Tyr-Trp, in which cleavage of the -Tyr-|-Leu- and -Tyr-|-Trp bonds also occurs).. Cleaves peptides in various proteins in a process that requires ATP hydrolysis. Has a chymotrypsin-like activity. Plays a major role in the degradation of misfolded proteins. This Nitrobacter hamburgensis (strain DSM 10229 / NCIMB 13809 / X14) protein is ATP-dependent Clp protease proteolytic subunit.